We begin with the raw amino-acid sequence, 418 residues long: Serine--tRNA ligase (418 aa).

227 to 229 (TSE) is a binding site for L-serine. Residues 258-260 (RRE) and V274 each bind ATP. Residue E281 participates in L-serine binding. 345–348 (ELTS) contacts ATP. T380 contributes to the L-serine binding site.

It belongs to the class-II aminoacyl-tRNA synthetase family. Type-1 seryl-tRNA synthetase subfamily. Homodimer. The tRNA molecule binds across the dimer.

It localises to the cytoplasm. It carries out the reaction tRNA(Ser) + L-serine + ATP = L-seryl-tRNA(Ser) + AMP + diphosphate + H(+). The catalysed reaction is tRNA(Sec) + L-serine + ATP = L-seryl-tRNA(Sec) + AMP + diphosphate + H(+). It participates in aminoacyl-tRNA biosynthesis; selenocysteinyl-tRNA(Sec) biosynthesis; L-seryl-tRNA(Sec) from L-serine and tRNA(Sec): step 1/1. Catalyzes the attachment of serine to tRNA(Ser). Is also able to aminoacylate tRNA(Sec) with serine, to form the misacylated tRNA L-seryl-tRNA(Sec), which will be further converted into selenocysteinyl-tRNA(Sec). This is Serine--tRNA ligase from Rhodococcus jostii (strain RHA1).